Here is a 568-residue protein sequence, read N- to C-terminus: Zinc finger protein 76 (568 aa).

Lysine 24 participates in a covalent cross-link: Glycyl lysine isopeptide (Lys-Gly) (interchain with G-Cter in SUMO2). A run of 3 repeats spans residues isoleucine 34–histidine 45, valine 62–histidine 73, and valine 88–histidine 99. The interval isoleucine 34 to histidine 99 is 3 X 12 AA approximate repeats. 7 C2H2-type zinc fingers span residues phenylalanine 165–histidine 189, tyrosine 195–histidine 219, tyrosine 225–histidine 249, phenylalanine 255–histidine 279, tyrosine 285–histidine 309, tyrosine 315–histidine 339, and tyrosine 345–histidine 368. Residues arginine 365–threonine 402 are disordered. Residues glutamine 379–glutamate 395 are compositionally biased toward low complexity.

This sequence belongs to the krueppel C2H2-type zinc-finger protein family.

It is found in the nucleus. Its function is as follows. May be involved in transcriptional regulation. The polypeptide is Zinc finger protein 76 (Znf76) (Mus musculus (Mouse)).